Reading from the N-terminus, the 729-residue chain is Probable ATP-dependent RNA helicase DDX4 (729 aa).

The tract at residues 22–246 is disordered; the sequence is FEKDRYSSGA…ESGDTQGPKV (225 aa). Residues 29 to 45 show a composition bias toward polar residues; that stretch reads SGANGDTFNRTPASSSE. Residues 71–80 are compositionally biased toward basic and acidic residues; it reads DPGESNKREN. Gly residues-rich tracts occupy residues 152-164 and 204-214; these read RGSF…GFGR and SGGGSGRGGYK. Phosphoserine occurs at positions 224 and 228. The interval 230–249 is interaction with RANBP9; that stretch reads KSEAEGGESGDTQGPKVTYI. Residues 290 to 318 carry the Q motif motif; the sequence is LTFEEANLCQTLNNNIAKAGYTKLTPVQK. Residues 321 to 504 form the Helicase ATP-binding domain; it reads IPIIQGGRDL…GEFLKSNYLF (184 aa). Position 334 to 341 (334 to 341) interacts with ATP; sequence AQTGSGKT. Positions 448 to 451 match the DEAD box motif; sequence DEAD. In terms of domain architecture, Helicase C-terminal spans 532-677; it reads KLVEILRNIG…DVPAWLEEIA (146 aa). The span at 706–720 shows a compositional bias: polar residues; sequence KSSLNTAGFSSTQAP. The interval 706-729 is disordered; sequence KSSLNTAGFSSTQAPNPVDDESWD. At Ser-727 the chain carries Phosphoserine.

It belongs to the DEAD box helicase family. DDX4/VASA subfamily. In terms of assembly, found in a mRNP complex, at least composed of TDRD1, TDRD6, TDRD7 and DDX4. Interacts with RANBP9. Interacts with RANBP10. Interacts with PIWIL2 and MAEL. Interacts with BMAL1 and CLOCK. Interacts with Tex19.1 and, probably, Tex19.2. Interacts with RBM46.

It localises to the cytoplasm. Its subcellular location is the perinuclear region. The enzyme catalyses ATP + H2O = ADP + phosphate + H(+). ATP-dependent RNA helicase required during spermatogenesis to repress transposable elements and preventing their mobilization, which is essential for the germline integrity. Acts via the piRNA metabolic process, which mediates the repression of transposable elements during meiosis by forming complexes composed of piRNAs and Piwi proteins and governs the methylation and subsequent repression of transposons. Involved in the secondary piRNAs metabolic process, the production of piRNAs in fetal male germ cells through a ping-pong amplification cycle. Required for PIWIL2 slicing-triggered piRNA biogenesis: helicase activity enables utilization of one of the slice cleavage fragments generated by PIWIL2 and processing these pre-piRNAs into piRNAs. This Bos taurus (Bovine) protein is Probable ATP-dependent RNA helicase DDX4 (DDX4).